A 199-amino-acid chain; its full sequence is MAEEQVLNTHNASILLSAANKSHYPQDDLPEIALAGRSNVGKSSFINTILGRKNLARTSSKPGKTQLLNFFNIDDKLRFVDVPGYGYAKVSKSERAKWGKMIEEYLTTRDNLRAVVSLVDLRHAPSKEDIQMYDFLKYYDIPVIVVATKADKIPRGKWNKHESVVKKALNFDKSDTFIVFSSVERIGIDDSWDAILEQV.

The EngB-type G domain occupies 28-199 (DLPEIALAGR…DSWDAILEQV (172 aa)). GTP contacts are provided by residues 36 to 43 (GRSNVGKS), 63 to 67 (GKTQL), 81 to 84 (DVPG), 148 to 151 (TKAD), and 180 to 182 (FSS). 2 residues coordinate Mg(2+): Ser-43 and Thr-65.

Belongs to the TRAFAC class TrmE-Era-EngA-EngB-Septin-like GTPase superfamily. EngB GTPase family. Requires Mg(2+) as cofactor.

Functionally, necessary for normal cell division and for the maintenance of normal septation. The protein is Probable GTP-binding protein EngB of Streptococcus pyogenes serotype M49 (strain NZ131).